The primary structure comprises 358 residues: Probable D-xylulose reductase A (358 aa).

Positions 47, 72, and 73 each coordinate Zn(2+). 182 to 187 serves as a coordination point for NAD(+); sequence GAGPVG.

Belongs to the zinc-containing alcohol dehydrogenase family. Zn(2+) serves as cofactor.

The enzyme catalyses xylitol + NAD(+) = D-xylulose + NADH + H(+). The protein operates within carbohydrate degradation; L-arabinose degradation via L-arabinitol; D-xylulose 5-phosphate from L-arabinose (fungal route): step 4/5. Xylitol dehydrogenase which catalyzes the conversion of xylitol to D-xylulose. Xylose is a major component of hemicelluloses such as xylan. Most fungi utilize D-xylose via three enzymatic reactions, xylose reductase (XR), xylitol dehydrogenase (XDH), and xylulokinase, to form xylulose 5-phosphate, which enters pentose phosphate pathway. The polypeptide is Probable D-xylulose reductase A (xdhA) (Neosartorya fischeri (strain ATCC 1020 / DSM 3700 / CBS 544.65 / FGSC A1164 / JCM 1740 / NRRL 181 / WB 181) (Aspergillus fischerianus)).